The sequence spans 123 residues: uncharacterized protein (123 aa).

2 disordered regions span residues 1–33 (MAPP…RRRK) and 82–123 (EKAA…EDKS). The span at 18–33 (KLFKRRRVLSRDRRRK) shows a compositional bias: basic residues.

This is an uncharacterized protein from Mus musculus (Mouse).